The following is a 331-amino-acid chain: UDP-GalNAc:beta-1,3-N-acetylgalactosaminyltransferase 1 (331 aa).

The Cytoplasmic segment spans residues 1-20 (MAPALPITLPSKMSLRSLKW). The chain crosses the membrane as a helical; Signal-anchor for type II membrane protein span at residues 21 to 43 (SLLLLSLLSFLVMWYLSLPHYNV). The Lumenal segment spans residues 44-331 (IERVNWMYFY…VMLRNTTCHY (288 aa)). N72, N154, N198, N212, and N326 each carry an N-linked (GlcNAc...) asparagine glycan.

This sequence belongs to the glycosyltransferase 31 family. Mg(2+) serves as cofactor.

It localises to the golgi apparatus membrane. It catalyses the reaction a globoside Gb3Cer (d18:1(4E)) + UDP-N-acetyl-alpha-D-galactosamine = a globoside Gb4Cer (d18:1(4E)) + UDP + H(+). It functions in the pathway protein modification; protein glycosylation. Functionally, transfers N-acetylgalactosamine onto globotriaosylceramide. Plays a critical role in preimplantation stage embryonic development. In Sus scrofa (Pig), this protein is UDP-GalNAc:beta-1,3-N-acetylgalactosaminyltransferase 1 (B3GALNT1).